We begin with the raw amino-acid sequence, 88 residues long: Cell division topological specificity factor (88 aa).

This sequence belongs to the MinE family.

Prevents the cell division inhibition by proteins MinC and MinD at internal division sites while permitting inhibition at polar sites. This ensures cell division at the proper site by restricting the formation of a division septum at the midpoint of the long axis of the cell. The polypeptide is Cell division topological specificity factor (Clostridium novyi (strain NT)).